Consider the following 375-residue polypeptide: Growth/differentiation factor 8 (375 aa).

A signal peptide spans 1 to 23 (MQKLAVYVYIYLFMQIAVDPVAL). Positions 24–266 (DGSSQPTENA…VTDTPKRSRR (243 aa)) are excised as a propeptide. N-linked (GlcNAc...) asparagine glycosylation is present at Asn-71. 4 disulfide bridges follow: Cys-272-Cys-282, Cys-281-Cys-340, Cys-309-Cys-372, and Cys-313-Cys-374.

Belongs to the TGF-beta family. In terms of assembly, homodimer; disulfide-linked.

It localises to the secreted. In terms of biological role, acts specifically as a negative regulator of skeletal muscle growth. The protein is Growth/differentiation factor 8 (MSTN) of Gallus gallus (Chicken).